We begin with the raw amino-acid sequence, 526 residues long: Maturase K (526 aa).

The protein belongs to the intron maturase 2 family. MatK subfamily.

It localises to the plastid. Its subcellular location is the chloroplast. Usually encoded in the trnK tRNA gene intron. Probably assists in splicing its own and other chloroplast group II introns. The protein is Maturase K of Iris setosa (Hiougi-ayame).